An 85-amino-acid chain; its full sequence is Exodeoxyribonuclease 7 small subunit (85 aa).

The protein belongs to the XseB family. Heterooligomer composed of large and small subunits.

The protein localises to the cytoplasm. The enzyme catalyses Exonucleolytic cleavage in either 5'- to 3'- or 3'- to 5'-direction to yield nucleoside 5'-phosphates.. Its function is as follows. Bidirectionally degrades single-stranded DNA into large acid-insoluble oligonucleotides, which are then degraded further into small acid-soluble oligonucleotides. The polypeptide is Exodeoxyribonuclease 7 small subunit (Alkalilimnicola ehrlichii (strain ATCC BAA-1101 / DSM 17681 / MLHE-1)).